Reading from the N-terminus, the 279-residue chain is Large ribosomal subunit protein uL2 (279 aa).

Disordered stretches follow at residues 31–61 and 222–279; these read KSLL…HKRH and GMAM…RNAK. Positions 49-61 are enriched in basic residues; that stretch reads KTSRHRGGGHKRH. Residues 232-242 are compositionally biased toward gly residues; sequence MGGGEGKSKSG. The span at 259–268 shows a compositional bias: basic residues; the sequence is LKTRNRKKAS.

Belongs to the universal ribosomal protein uL2 family. As to quaternary structure, part of the 50S ribosomal subunit. Forms a bridge to the 30S subunit in the 70S ribosome.

Its function is as follows. One of the primary rRNA binding proteins. Required for association of the 30S and 50S subunits to form the 70S ribosome, for tRNA binding and peptide bond formation. It has been suggested to have peptidyltransferase activity; this is somewhat controversial. Makes several contacts with the 16S rRNA in the 70S ribosome. This is Large ribosomal subunit protein uL2 from Chlorobium chlorochromatii (strain CaD3).